The following is a 262-amino-acid chain: Spindlin-Z (262 aa).

Positions 1–50 are disordered; it reads MKTPFGKSPGQRSRADAGHAGVSASMMKKRTSHKKHRNNVGPSKPISQPR. Over residues 27 to 38 the composition is skewed to basic residues; sequence MKKRTSHKKHRN.

Belongs to the SPIN/STSY family. As to expression, expressed in several tissues including testis.

It localises to the nucleus. Functionally, may play a role in mitosis. This is Spindlin-Z (SPINZ) from Gallus gallus (Chicken).